The primary structure comprises 479 residues: MRAMPLSIGTIHFVGIAGIGMSGIAEVLHNLGYSVQGSDLSENANVARLRAAGIPVAIGHDAANLGNAQVVVVSTAVPRDNPEVQAARKRMIPVVRRAEMLGELMRLRWSVAIGGTHGKTTTTSLVAAVLEGAGLDPTVINGGIINAYGTNARLGGGDWMVVEADESDGSFLRLPAVIAVVTNMDPEHLDHWGSAEAMEAGYRQFVSNIPFYGFAVLCIDHPGVQRMIPDLSDHRLITYGLSPQADVRAERIMSDRNGATFEVRLSERVAGRERVLAPMRLPMLGNHNVQNALAAIAIGIEMEVPEVDLRAALASFRGVKRRFTKTGEVAGITVIDDYGHHPVEIAAVLRAARQAGARDVIAVVQPHRYTRLATLFEDFCTCMNDAGKVIVADVYPAGEEPIPGIDRDALVEGLRARGHKSVVSLGSPDHLAEMINAMARAGDYVVCLGAGSITNWAQALPNQLQALIETTRRGAGGMR.

115–121 (GTHGKTT) contributes to the ATP binding site.

The protein belongs to the MurCDEF family.

The protein localises to the cytoplasm. The catalysed reaction is UDP-N-acetyl-alpha-D-muramate + L-alanine + ATP = UDP-N-acetyl-alpha-D-muramoyl-L-alanine + ADP + phosphate + H(+). It functions in the pathway cell wall biogenesis; peptidoglycan biosynthesis. In terms of biological role, cell wall formation. This Acidiphilium cryptum (strain JF-5) protein is UDP-N-acetylmuramate--L-alanine ligase.